A 641-amino-acid polypeptide reads, in one-letter code: Epithelial sodium channel subunit beta (641 aa).

At 1–50 (MHVKKYLLKGLHRLQKGPGYTYKELLVWYCDNTNTHGPKRIICEGPKKKA) the chain is on the cytoplasmic side. The helical transmembrane segment at 51–71 (MWFVLTLLFTSLVCWQWGLFI) threads the bilayer. Residues 72 to 533 (KTYLNWEVSV…GGQFGFWMGG (462 aa)) are Extracellular-facing. Disulfide bonds link Cys-98–Cys-273, Cys-185–Cys-190, Cys-197–Cys-204, Cys-250–Cys-257, Cys-362–Cys-449, Cys-387–Cys-445, Cys-391–Cys-441, Cys-400–Cys-427, and Cys-402–Cys-416. Asn-141 carries N-linked (GlcNAc...) asparagine glycosylation. N-linked (GlcNAc...) asparagine glycosylation is present at Asn-379. Residues 534-554 (SVLCLIEFGEIIIDFVWITII) form a helical membrane-spanning segment. Topologically, residues 555-641 (KLVALAKSVR…IESDSEGDAI (87 aa)) are cytoplasmic. Positions 597 to 624 (TPGPDVEAYPHEQNPPIPGTPPPNYDSL) are disordered. Residues 609-620 (QNPPIPGTPPPN) are compositionally biased toward pro residues. A PY motif; recruits WW domain-containing proteins and is thereby required for ubiquitination and inhibition of the channel by NEDD4 and NEDD4L motif is present at residues 617–621 (PPPNY). 2 positions are modified to phosphoserine: Ser-634 and Ser-636.

Belongs to the amiloride-sensitive sodium channel (TC 1.A.6) family. SCNN1B subfamily. As to quaternary structure, component of the heterotrimeric epithelial sodium channel (ENaC) composed of an alpha/SCNN1A, a beta/SCNN1B and a gamma/SCNN1G subunit. An additional delta/SCNN1D subunit can replace the alpha/SCNN1A subunit to form an alternative channel with specific properties. Interacts with WWP1 (via WW domains). Interacts with WWP2 (via WW domains); inhibits the channel. Interacts with the full-length immature form of PCSK9 (pro-PCSK9). Interacts (N-glycosylated) with BPIFA1; the interaction is direct and inhibits the proteolytic processing of SCNN1A and SCNN1G and the activation of ENaC. Post-translationally, ubiquitinated. Can be ubiquitinated at multiple sites and undergo monoubiquitination and polyubiquitination. Ubiquitination by NEDD4 or NEDD4L inhibits the ENaC channel through endocytosis, intracellular retention and degradation of its individual subunits. However, some studies could not confirm the ubiquitination of this subunit of the ENaC. In terms of processing, phosphorylated on serine and threonine residues. Aldosterone and insulin increase the basal level of phosphorylation. N-glycosylated. N-glycosylation is required for interaction with BPIFA1.

It is found in the apical cell membrane. It localises to the cytoplasmic vesicle membrane. It catalyses the reaction Na(+)(in) = Na(+)(out). With respect to regulation, originally identified and characterized by its inhibition by the diuretic drug amiloride. Functionally, this is one of the three pore-forming subunits of the heterotrimeric epithelial sodium channel (ENaC), a critical regulator of sodium balance and fluid homeostasis. ENaC operates in epithelial tissues, where it mediates the electrodiffusion of sodium ions from extracellular fluid through the apical membrane of cells, with water following osmotically. It plays a key role in maintaining sodium homeostasis through electrogenic sodium reabsorption in the kidneys. Additionally, ENaC is essential for airway surface liquid homeostasis, which is crucial for proper mucus clearance. This is Epithelial sodium channel subunit beta from Bos taurus (Bovine).